The following is a 495-amino-acid chain: Putative aldehyde dehydrogenase AldA (495 aa).

212–218 (GKGSESG) serves as a coordination point for NAD(+). Residues Glu-256 and Cys-290 contribute to the active site.

It belongs to the aldehyde dehydrogenase family.

It catalyses the reaction an aldehyde + NAD(+) + H2O = a carboxylate + NADH + 2 H(+). This Staphylococcus aureus (strain bovine RF122 / ET3-1) protein is Putative aldehyde dehydrogenase AldA (aldA).